A 198-amino-acid polypeptide reads, in one-letter code: uncharacterized protein (198 aa).

Positions 1 to 110 (MTGYFLPPQT…GTTVSDDFEG (110 aa)) constitute a PA14 domain.

The protein belongs to the flocculin family.

This is an uncharacterized protein from Saccharomyces cerevisiae (strain ATCC 204508 / S288c) (Baker's yeast).